We begin with the raw amino-acid sequence, 158 residues long: Protein Smg homolog (158 aa).

The protein belongs to the Smg family.

The polypeptide is Protein Smg homolog (Herminiimonas arsenicoxydans).